We begin with the raw amino-acid sequence, 396 residues long: Phosphoglycerate kinase (396 aa).

Substrate is bound by residues 23 to 25, Arg38, 61 to 64, Arg122, and Arg155; these read DFN and HMGK. ATP is bound by residues Lys206, Gly296, Glu327, and 353 to 356; that span reads GGDS.

Belongs to the phosphoglycerate kinase family. Monomer.

The protein resides in the cytoplasm. It carries out the reaction (2R)-3-phosphoglycerate + ATP = (2R)-3-phospho-glyceroyl phosphate + ADP. The protein operates within carbohydrate degradation; glycolysis; pyruvate from D-glyceraldehyde 3-phosphate: step 2/5. The polypeptide is Phosphoglycerate kinase (Clostridium botulinum (strain Eklund 17B / Type B)).